Here is an 88-residue protein sequence, read N- to C-terminus: UPF0250 protein Sbal_3280 (88 aa).

It belongs to the UPF0250 family.

The chain is UPF0250 protein Sbal_3280 from Shewanella baltica (strain OS155 / ATCC BAA-1091).